Consider the following 113-residue polypeptide: Hydrogenase maturation factor HypA (113 aa).

Residue H2 participates in Ni(2+) binding. Zn(2+) is bound by residues C73, C76, C89, and C92.

This sequence belongs to the HypA/HybF family.

Its function is as follows. Involved in the maturation of [NiFe] hydrogenases. Required for nickel insertion into the metal center of the hydrogenase. This chain is Hydrogenase maturation factor HypA, found in Beijerinckia indica subsp. indica (strain ATCC 9039 / DSM 1715 / NCIMB 8712).